The sequence spans 239 residues: Phosphoribosylaminoimidazole-succinocarboxamide synthase (239 aa).

This sequence belongs to the SAICAR synthetase family.

The enzyme catalyses 5-amino-1-(5-phospho-D-ribosyl)imidazole-4-carboxylate + L-aspartate + ATP = (2S)-2-[5-amino-1-(5-phospho-beta-D-ribosyl)imidazole-4-carboxamido]succinate + ADP + phosphate + 2 H(+). The protein operates within purine metabolism; IMP biosynthesis via de novo pathway; 5-amino-1-(5-phospho-D-ribosyl)imidazole-4-carboxamide from 5-amino-1-(5-phospho-D-ribosyl)imidazole-4-carboxylate: step 1/2. This chain is Phosphoribosylaminoimidazole-succinocarboxamide synthase, found in Shouchella clausii (strain KSM-K16) (Alkalihalobacillus clausii).